A 470-amino-acid chain; its full sequence is MPMRSKTPTPLRFSNGKHQRDDSEYSWTDVGTGEKARNVSVLGAIRRAAKKVFVIIFLGQRKLKPTECRSDPGESSTHDRESTLSGWTGYSSPSSFGRSTERKVSGQYRFSGSRFQSPGKDSSSSKSWHQGPVIFSFGELQRATANFSSVHQIGEGGFGTVFKGKLDDGTIVAIKRARKNNYGKSWLLEFKNEIYTLSKIEHMNLVKLYGFLEHGDEKVIVVEYVANGNLREHLDGLRGNRLEMAERLEIAIDVAHALTYLHTYTDSPIIHRDIKASNILITNKLRAKVADFGFARLVSEDLGATHISTQVKGSAGYVDPDYLRTFQLTDKSDVYSFGVLLVEILTGRRPIELKRPRKDRLTVKWALRRLKDDEAVLIMDPFLKRNRAAIEVAEKMLRLASECVTPTRATRPAMKGIAEKLWAIRREMKETMICSSASNSSCSSTTHSFIGRDSDRYALPRIEDNENSIE.

Disordered stretches follow at residues 1 to 29 and 65 to 128; these read MPMR…SWTD and PTEC…SKSW. A compositionally biased stretch (basic and acidic residues) spans 65 to 82; it reads PTECRSDPGESSTHDRES. 2 stretches are compositionally biased toward polar residues: residues 83 to 98 and 108 to 121; these read TLSG…SFGR and YRFS…PGKD. One can recognise a Protein kinase domain in the interval 147–423; that stretch reads FSSVHQIGEG…MKGIAEKLWA (277 aa). Residues 153-161 and Lys175 contribute to the ATP site; that span reads IGEGGFGTV. Residues 162–185 form a caM-binding region; sequence FKGKLDDGTIVAIKRARKNNYGKS. Asp273 functions as the Proton acceptor in the catalytic mechanism. Residues Ser277 and Ser308 each carry the phosphoserine modification. Position 309 is a phosphothreonine (Thr309). Residue Tyr322 is modified to Phosphotyrosine.

This sequence belongs to the protein kinase superfamily. Ser/Thr protein kinase family. As to quaternary structure, interacts with calmodulin (CaM) in a Ca(2+)-dependent manner. Mg(2+) is required as a cofactor. In terms of processing, autophosphorylated.

The protein localises to the cytoplasm. The enzyme catalyses L-seryl-[protein] + ATP = O-phospho-L-seryl-[protein] + ADP + H(+). The catalysed reaction is L-threonyl-[protein] + ATP = O-phospho-L-threonyl-[protein] + ADP + H(+). Up-regulated by Ca(2+)/CaM. This Arabidopsis thaliana (Mouse-ear cress) protein is Calmodulin-binding receptor-like cytoplasmic kinase 1 (CRCK1).